The sequence spans 293 residues: Bifunctional protein FolD (293 aa).

NADP(+) contacts are provided by residues 162–164 (GQS) and isoleucine 227.

Belongs to the tetrahydrofolate dehydrogenase/cyclohydrolase family. As to quaternary structure, homodimer.

The enzyme catalyses (6R)-5,10-methylene-5,6,7,8-tetrahydrofolate + NADP(+) = (6R)-5,10-methenyltetrahydrofolate + NADPH. The catalysed reaction is (6R)-5,10-methenyltetrahydrofolate + H2O = (6R)-10-formyltetrahydrofolate + H(+). It participates in one-carbon metabolism; tetrahydrofolate interconversion. Catalyzes the oxidation of 5,10-methylenetetrahydrofolate to 5,10-methenyltetrahydrofolate and then the hydrolysis of 5,10-methenyltetrahydrofolate to 10-formyltetrahydrofolate. The protein is Bifunctional protein FolD of Metamycoplasma arthritidis (strain 158L3-1) (Mycoplasma arthritidis).